The primary structure comprises 203 residues: Protein S40-6 (203 aa).

The disordered stretch occupies residues 1–33; the sequence is MAKGRKPTTMNRSDRYLGSYTYGDSHGNSVTDE.

Belongs to the senescence regulator S40 family.

The protein resides in the cytoplasm. In Arabidopsis thaliana (Mouse-ear cress), this protein is Protein S40-6.